The primary structure comprises 694 residues: Elongation factor G (694 aa).

In terms of domain architecture, tr-type G spans 8–287; it reads EDYRNFGIMA…AVVEFLPAPT (280 aa). GTP is bound by residues 17 to 24, 86 to 90, and 140 to 143; these read AHIDAGKT, DTPGH, and NKMD.

Belongs to the TRAFAC class translation factor GTPase superfamily. Classic translation factor GTPase family. EF-G/EF-2 subfamily.

It is found in the cytoplasm. In terms of biological role, catalyzes the GTP-dependent ribosomal translocation step during translation elongation. During this step, the ribosome changes from the pre-translocational (PRE) to the post-translocational (POST) state as the newly formed A-site-bound peptidyl-tRNA and P-site-bound deacylated tRNA move to the P and E sites, respectively. Catalyzes the coordinated movement of the two tRNA molecules, the mRNA and conformational changes in the ribosome. The sequence is that of Elongation factor G from Brucella canis (strain ATCC 23365 / NCTC 10854 / RM-666).